The primary structure comprises 224 residues: Uracil-DNA glycosylase 2 (224 aa).

The active-site Proton acceptor is the aspartate 64.

It belongs to the uracil-DNA glycosylase (UDG) superfamily. UNG family.

Its subcellular location is the cytoplasm. The enzyme catalyses Hydrolyzes single-stranded DNA or mismatched double-stranded DNA and polynucleotides, releasing free uracil.. Its function is as follows. Excises uracil residues from the DNA which can arise as a result of misincorporation of dUMP residues by DNA polymerase or due to deamination of cytosine. The chain is Uracil-DNA glycosylase 2 from Listeria monocytogenes serovar 1/2a (strain ATCC BAA-679 / EGD-e).